We begin with the raw amino-acid sequence, 519 residues long: Probable pectinesterase/pectinesterase inhibitor 36 (519 aa).

The first 25 residues, 1–25 (MSTFVKVTDLITIMFFLAIAAVITA), serve as a signal peptide directing secretion. The pectinesterase inhibitor 36 stretch occupies residues 27 to 141 (NTAELDVLEM…TFVLHEALAF (115 aa)). 2 N-linked (GlcNAc...) asparagine glycosylation sites follow: Asn92 and Asn130. The segment at 147 to 196 (GHMKKRLHGPARQGHGPTRPKHRPTRPNHGPGRSHHGPSRPNQNGGMLVS) is disordered. Positions 164–184 (TRPKHRPTRPNHGPGRSHHGP) are enriched in basic residues. Residues 186 to 196 (RPNQNGGMLVS) are compositionally biased toward polar residues. The interval 205–505 (DFVVARDGSA…FTVSRFIQGD (301 aa)) is pectinesterase 36. Thr283 and Gln313 together coordinate substrate. Asp336 functions as the Proton donor; for pectinesterase activity in the catalytic mechanism. Residue Asp357 is the Nucleophile; for pectinesterase activity of the active site. Substrate-binding residues include Arg425 and Trp427.

It in the N-terminal section; belongs to the PMEI family. The protein in the C-terminal section; belongs to the pectinesterase family. In terms of tissue distribution, expressed in siliques.

The protein localises to the secreted. It is found in the cell wall. It carries out the reaction [(1-&gt;4)-alpha-D-galacturonosyl methyl ester](n) + n H2O = [(1-&gt;4)-alpha-D-galacturonosyl](n) + n methanol + n H(+). Its pathway is glycan metabolism; pectin degradation; 2-dehydro-3-deoxy-D-gluconate from pectin: step 1/5. Its function is as follows. Acts in the modification of cell walls via demethylesterification of cell wall pectin. In Arabidopsis thaliana (Mouse-ear cress), this protein is Probable pectinesterase/pectinesterase inhibitor 36 (PME36).